The chain runs to 196 residues: MPIGVPKVPFRSPGEEDASWVDVYNRLYRERLLFLGQEVDSEISNQLIGLMVYLSIEDETKDLYLFINSPGGWVIPGVAIYDTMQFVRPDVHTICMGLAASMGSFILVGGEITKRLAFPHARVMIHQPASSFYEAQTGEFVLEAEELLKLRETLTRVYVQRTGKPLWVVSEDMERDVFMSATEAQAYGIVDLVAVE.

The Nucleophile role is filled by serine 101. The active site involves histidine 126.

Belongs to the peptidase S14 family. In terms of assembly, component of the chloroplastic Clp protease core complex.

The protein localises to the plastid. The protein resides in the chloroplast stroma. The enzyme catalyses Hydrolysis of proteins to small peptides in the presence of ATP and magnesium. alpha-casein is the usual test substrate. In the absence of ATP, only oligopeptides shorter than five residues are hydrolyzed (such as succinyl-Leu-Tyr-|-NHMec, and Leu-Tyr-Leu-|-Tyr-Trp, in which cleavage of the -Tyr-|-Leu- and -Tyr-|-Trp bonds also occurs).. Its function is as follows. Cleaves peptides in various proteins in a process that requires ATP hydrolysis. Has a chymotrypsin-like activity. Plays a major role in the degradation of misfolded proteins. This chain is ATP-dependent Clp protease proteolytic subunit, found in Nicotiana tabacum (Common tobacco).